Consider the following 162-residue polypeptide: Small ribosomal subunit protein uS9 (162 aa).

Belongs to the universal ribosomal protein uS9 family.

The protein is Small ribosomal subunit protein uS9 of Methylobacterium sp. (strain 4-46).